A 185-amino-acid chain; its full sequence is Casparian strip membrane protein 1 (185 aa).

The Cytoplasmic segment spans residues 1–32 (MKAVSIEAGERSKAKRVHGVNRGISVFDLVLR). A helical transmembrane segment spans residues 33 to 53 (IVALVGTLASAVAMGTAGQAL). Topologically, residues 54–73 (SFSTQIVNFEAQYDDIDAFK) are extracellular. The chain crosses the membrane as a helical span at residues 74–94 (FFVVSNSITCVYLALSIPISI). Topologically, residues 95-106 (FHIIRSRAGKSR) are cytoplasmic. Residues 107–127 (VLLIVLDAIMLVFLTSGASAA) traverse the membrane as a helical segment. Residues 128–160 (AAIVYLAHNGNTSTNWFSICQQYTDFCQRSAGS) are Extracellular-facing. N-linked (GlcNAc...) asparagine glycosylation is present at asparagine 138. Residues 161 to 181 (LIGSFGAMALMVLLIILSSIA) form a helical membrane-spanning segment. The Cytoplasmic portion of the chain corresponds to 182-185 (LSRR).

It belongs to the Casparian strip membrane proteins (CASP) family. As to quaternary structure, homodimer and heterodimers.

It localises to the cell membrane. In terms of biological role, regulates membrane-cell wall junctions and localized cell wall deposition. Required for establishment of the Casparian strip membrane domain (CSD) and the subsequent formation of Casparian strips, a cell wall modification of the root endodermis that determines an apoplastic barrier between the intraorganismal apoplasm and the extraorganismal apoplasm and prevents lateral diffusion. The polypeptide is Casparian strip membrane protein 1 (Solanum demissum (Wild potato)).